Reading from the N-terminus, the 61-residue chain is Small ribosomal subunit protein bS21 (61 aa).

Positions 40–61 (KPSVKRKKKSEAARKRKNKRRF) are disordered. A compositionally biased stretch (basic residues) spans 43–61 (VKRKKKSEAARKRKNKRRF).

Belongs to the bacterial ribosomal protein bS21 family.

This chain is Small ribosomal subunit protein bS21, found in Ligilactobacillus salivarius (strain UCC118) (Lactobacillus salivarius).